The chain runs to 83 residues: Alpha-neurotoxin NTX-1 (83 aa).

An N-terminal signal peptide occupies residues 1–21 (MKTLLLTLLVVTIVCLDLGYT). 4 disulfide bridges follow: Cys24–Cys45, Cys38–Cys62, Cys64–Cys75, and Cys76–Cys81.

This sequence belongs to the three-finger toxin family. Short-chain subfamily. Type I alpha-neurotoxin sub-subfamily. In terms of tissue distribution, expressed by the venom gland.

It is found in the secreted. Binds to muscle nicotinic acetylcholine receptor (nAChR) and inhibit acetylcholine from binding to the receptor, thereby impairing neuromuscular transmission. This chain is Alpha-neurotoxin NTX-1, found in Naja sputatrix (Malayan spitting cobra).